The following is a 473-amino-acid chain: UDP-N-acetylmuramate--L-alanine ligase (473 aa).

115–121 provides a ligand contact to ATP; sequence GTHGKTT.

This sequence belongs to the MurCDEF family.

The protein resides in the cytoplasm. It catalyses the reaction UDP-N-acetyl-alpha-D-muramate + L-alanine + ATP = UDP-N-acetyl-alpha-D-muramoyl-L-alanine + ADP + phosphate + H(+). Its pathway is cell wall biogenesis; peptidoglycan biosynthesis. Its function is as follows. Cell wall formation. This chain is UDP-N-acetylmuramate--L-alanine ligase, found in Rhizorhabdus wittichii (strain DSM 6014 / CCUG 31198 / JCM 15750 / NBRC 105917 / EY 4224 / RW1) (Sphingomonas wittichii).